The sequence spans 89 residues: DNA/RNA-binding protein Alba 2 (89 aa).

It belongs to the histone-like Alba family. Forms homodimers and homotetramers. Interacts with Alba 1.

It is found in the cytoplasm. Its subcellular location is the chromosome. Its function is as follows. Binds double-stranded DNA tightly but without sequence specificity. Involved in DNA compaction. This chain is DNA/RNA-binding protein Alba 2, found in Archaeoglobus fulgidus (strain ATCC 49558 / DSM 4304 / JCM 9628 / NBRC 100126 / VC-16).